Consider the following 216-residue polypeptide: Redox-sensing transcriptional repressor Rex (216 aa).

Positions 15-54 (KYLRVTQQLIEEGRDAVSSKELGDFTGINPVQVRRDLNAI) form a DNA-binding region, H-T-H motif. 89–94 (GAGNLG) provides a ligand contact to NAD(+).

This sequence belongs to the transcriptional regulatory Rex family. In terms of assembly, homodimer.

Its subcellular location is the cytoplasm. Functionally, modulates transcription in response to changes in cellular NADH/NAD(+) redox state. This is Redox-sensing transcriptional repressor Rex from Rubrobacter xylanophilus (strain DSM 9941 / JCM 11954 / NBRC 16129 / PRD-1).